The following is a 143-amino-acid chain: MAKKIVGFVKLQVPAGKANPSPPIGPALGQRGLNIMEFCKAFNAQTQGIEPGLPLPVVITAFADKSFTFVIKSPPSSILIKKAVGVTKGSATPQSVKVGKITRAQLEEIAKTKMKDLTAADMDAAVRTIAGSARSMGVNVEGV.

It belongs to the universal ribosomal protein uL11 family. Part of the ribosomal stalk of the 50S ribosomal subunit. Interacts with L10 and the large rRNA to form the base of the stalk. L10 forms an elongated spine to which L12 dimers bind in a sequential fashion forming a multimeric L10(L12)X complex. In terms of processing, one or more lysine residues are methylated.

In terms of biological role, forms part of the ribosomal stalk which helps the ribosome interact with GTP-bound translation factors. This is Large ribosomal subunit protein uL11 from Albidiferax ferrireducens (strain ATCC BAA-621 / DSM 15236 / T118) (Rhodoferax ferrireducens).